The following is a 113-amino-acid chain: Hydrogenase maturation factor HypA (113 aa).

Residue His-2 coordinates Ni(2+). Zn(2+)-binding residues include Cys-73, Cys-76, Cys-89, and Cys-92.

The protein belongs to the HypA/HybF family.

Its function is as follows. Involved in the maturation of [NiFe] hydrogenases. Required for nickel insertion into the metal center of the hydrogenase. The polypeptide is Hydrogenase maturation factor HypA (Rhizobium leguminosarum bv. viciae).